The sequence spans 368 residues: Chaperone protein DnaJ (368 aa).

Residues 5-69 (DYYEVLGVAR…NQRARYDQFG (65 aa)) form the J domain. A CR-type zinc finger spans residues 125 to 207 (GVEKVITIPV…CRGAGRVRKN (83 aa)). Residues Cys138, Cys141, Cys155, Cys158, Cys181, Cys184, Cys195, and Cys198 each contribute to the Zn(2+) site. CXXCXGXG motif repeat units lie at residues 138–145 (CGTCHGSG), 155–162 (CKRCGGSG), 181–188 (CSTCHGRG), and 195–202 (CETCRGAG).

This sequence belongs to the DnaJ family. In terms of assembly, homodimer. Zn(2+) is required as a cofactor.

It is found in the cytoplasm. Functionally, participates actively in the response to hyperosmotic and heat shock by preventing the aggregation of stress-denatured proteins and by disaggregating proteins, also in an autonomous, DnaK-independent fashion. Unfolded proteins bind initially to DnaJ; upon interaction with the DnaJ-bound protein, DnaK hydrolyzes its bound ATP, resulting in the formation of a stable complex. GrpE releases ADP from DnaK; ATP binding to DnaK triggers the release of the substrate protein, thus completing the reaction cycle. Several rounds of ATP-dependent interactions between DnaJ, DnaK and GrpE are required for fully efficient folding. Also involved, together with DnaK and GrpE, in the DNA replication of plasmids through activation of initiation proteins. The protein is Chaperone protein DnaJ of Exiguobacterium sibiricum (strain DSM 17290 / CCUG 55495 / CIP 109462 / JCM 13490 / 255-15).